The following is a 596-amino-acid chain: Membrane protein insertase YidC (596 aa).

Helical transmembrane passes span 4–24, 332–352, 359–379, 425–445, 468–488, and 518–538; these read NKLIGLILISILLIVYTHFFD, LGWPIVKWINLYLIIPIFSFI, YGLVILILVIFIKLLLLPLSY, LSGCIPVLLQMPILLAMFNFF, IINLPFQIPFYGSHVSLFTLL, and PITFMFILNSFPAGLSFYYFV. Basic and acidic residues predominate over residues 565–584; sequence KNKEKSANNKEGSFKKRFQD. The tract at residues 565 to 596 is disordered; it reads KNKEKSANNKEGSFKKRFQDAIKASASHKGKK.

It belongs to the OXA1/ALB3/YidC family. Type 1 subfamily. As to quaternary structure, interacts with the Sec translocase complex via SecD. Specifically interacts with transmembrane segments of nascent integral membrane proteins during membrane integration.

The protein localises to the cell inner membrane. Its function is as follows. Required for the insertion and/or proper folding and/or complex formation of integral membrane proteins into the membrane. Involved in integration of membrane proteins that insert both dependently and independently of the Sec translocase complex, as well as at least some lipoproteins. Aids folding of multispanning membrane proteins. The sequence is that of Membrane protein insertase YidC from Amoebophilus asiaticus (strain 5a2).